The sequence spans 994 residues: MTLPSGDSSITNNTNQTLNEDEKRRLRREKLAALRQKKLAEAQNGEGNKRQEGNGNGTGQGTGNVAADLTTKRNEKQKVENSFAKLNSTSIDHSSTETQATSLEEKQRLLLKRQGQRIEDWKKNRSADTASHFPQRAKENLSHTRIAITKKSTFKLPKIKRNNNKRVFGFVNEDKEGGGGKEEEDEEEEFTKKKILKIANDDARDYLNYGEKFRKPVLEEAEDDLDQFIESISKSESFVDNNNGGKQVQEQNVEEEKQQQQQQQLEQEQEQEQEQLEKLPRYLAVNNNNNEDTDEVYRYEEDFDDEFDEDDEDDINKRLSAKLNKLQNTAKELKEIDHTSIEYPKFRKHFYQVPFEMSTMDNRELDMLRLELDNVRARGKNVPPPFLTWGQLLMPESVMSVIQNDLGFAKPSPIQCQAIPIVLSGRDMIGVAKTGSGKTLSYVLPMVRHIQDQLFPKPGEGPIGLVLSPTRELALQIEKEILKFSSTMDLKVCCCYGGSNIENQISELKRGVNVIVATPGRLIDLLAANGGRITTLRRTTFVVLDEADRMFDMGFEPQIQKIFTQIRPDKQTVLFSATFPRKLEQLAKKVLHNPIEIIVGGVSVVASEISQEIILFEDTDQLMNHKIQKLEDILSRFFDLGKNTGKVLVFVEKQTDADKLVSVLLKKAIPCIAIHGGKDQIDRKHAIREFSDDQSGINVLIATSIAARGLDVRNLDLVVNFEPPSHLEDYVHRVGRTGRAGKHGEAITFVDNTQEKEISILVKALKMSSRAVDSKLQEIADKFMKKIESGEEKRSSGFGGKGLEKLQNVRETNMQLQKKMFGNFKKEDGKKSHRDLSEQVDYFGSSSSSSSFPSSSNTTTTTTTTSTASAIEIPTFEIIEGNSPETSGPDKCKFYCRVTINDLPQKVRWGIVQRESLSKIIEASKTSITTRGQFYPPQSKQTPTNDQPKLYLLIEGLTRKAVEEAAVLIRDKMLQGVEAMRLDNHSAPTGRYVV.

Positions 1–18 (MTLPSGDSSITNNTNQTL) are enriched in polar residues. 3 disordered regions span residues 1–105 (MTLP…SLEE), 170–190 (FVNE…EEEF), and 235–275 (SESF…EQEQ). Basic and acidic residues-rich tracts occupy residues 20–32 (EDEK…EKLA) and 70–79 (TTKRNEKQKV). Residues 20 to 87 (EDEKRRLRRE…KVENSFAKLN (68 aa)) are a coiled coil. Residues 84 to 102 (AKLNSTSIDHSSTETQATS) show a composition bias toward polar residues. Over residues 172-181 (NEDKEGGGGK) the composition is skewed to basic and acidic residues. Coiled coils occupy residues 217–284 (VLEE…RYLA) and 310–382 (DDED…GKNV). Residues 235-245 (SESFVDNNNGG) are compositionally biased toward polar residues. The short motif at 387 to 416 (LTWGQLLMPESVMSVIQNDLGFAKPSPIQC) is the Q motif element. The Helicase ATP-binding domain maps to 419-597 (IPIVLSGRDM…KKVLHNPIEI (179 aa)). 432 to 439 (AKTGSGKT) contributes to the ATP binding site. Positions 545–548 (DEAD) match the DEAD box motif. Residues 629 to 780 (KLEDILSRFF…AVDSKLQEIA (152 aa)) form the Helicase C-terminal domain. Residues 842–867 (YFGSSSSSSSFPSSSNTTTTTTTTST) form a disordered region. Over residues 845–867 (SSSSSSSFPSSSNTTTTTTTTST) the composition is skewed to low complexity.

The protein belongs to the DEAD box helicase family. DDX46/PRP5 subfamily.

It localises to the nucleus. It catalyses the reaction ATP + H2O = ADP + phosphate + H(+). Its function is as follows. ATP-dependent RNA helicase involved spliceosome assembly and in nuclear splicing. Catalyzes an ATP-dependent conformational change of U2 snRNP. Bridges U1 and U2 snRNPs and enables stable U2 snRNP association with intron RNA. The polypeptide is Pre-mRNA-processing ATP-dependent RNA helicase PRP5 (PRP5) (Lodderomyces elongisporus (strain ATCC 11503 / CBS 2605 / JCM 1781 / NBRC 1676 / NRRL YB-4239) (Yeast)).